The primary structure comprises 143 residues: Phosphoprotein 32 (143 aa).

Over residues 1 to 14 the composition is skewed to polar residues; sequence MESSNINALQQPSS. A disordered region spans residues 1 to 32; sequence MESSNINALQQPSSIAHHPSKQCASSLNETVK.

It belongs to the varicellovirus ORF32 protein family. In terms of processing, phosphorylated by ORF47 protein.

The polypeptide is Phosphoprotein 32 (Homo sapiens (Human)).